Consider the following 84-residue polypeptide: Putative membrane protein insertion efficiency factor (84 aa).

It belongs to the UPF0161 family.

The protein resides in the cell inner membrane. Could be involved in insertion of integral membrane proteins into the membrane. The sequence is that of Putative membrane protein insertion efficiency factor from Acidiphilium cryptum (strain JF-5).